We begin with the raw amino-acid sequence, 156 residues long: Small ribosomal subunit protein uS7 (156 aa).

It belongs to the universal ribosomal protein uS7 family. As to quaternary structure, part of the 30S ribosomal subunit. Contacts proteins S9 and S11.

One of the primary rRNA binding proteins, it binds directly to 16S rRNA where it nucleates assembly of the head domain of the 30S subunit. Is located at the subunit interface close to the decoding center, probably blocks exit of the E-site tRNA. In Prochlorococcus marinus subsp. pastoris (strain CCMP1986 / NIES-2087 / MED4), this protein is Small ribosomal subunit protein uS7.